A 319-amino-acid chain; its full sequence is 33 kDa chaperonin (319 aa).

Intrachain disulfides connect C239–C241 and C272–C275. Positions 300-319 (EVSEEMKKAEEKEKEEKNKK) are disordered.

The protein belongs to the HSP33 family. Post-translationally, under oxidizing conditions two disulfide bonds are formed involving the reactive cysteines. Under reducing conditions zinc is bound to the reactive cysteines and the protein is inactive.

Its subcellular location is the cytoplasm. Functionally, redox regulated molecular chaperone. Protects both thermally unfolding and oxidatively damaged proteins from irreversible aggregation. Plays an important role in the bacterial defense system toward oxidative stress. The sequence is that of 33 kDa chaperonin from Clostridium perfringens (strain ATCC 13124 / DSM 756 / JCM 1290 / NCIMB 6125 / NCTC 8237 / Type A).